Reading from the N-terminus, the 137-residue chain is Large ribosomal subunit protein uL16 (137 aa).

It belongs to the universal ribosomal protein uL16 family. In terms of assembly, part of the 50S ribosomal subunit.

Its function is as follows. Binds 23S rRNA and is also seen to make contacts with the A and possibly P site tRNAs. The chain is Large ribosomal subunit protein uL16 from Leptospira biflexa serovar Patoc (strain Patoc 1 / Ames).